A 360-amino-acid polypeptide reads, in one-letter code: Protein RecA (360 aa).

77–84 (GPESSGKT) lines the ATP pocket.

It belongs to the RecA family.

It is found in the cytoplasm. Its function is as follows. Can catalyze the hydrolysis of ATP in the presence of single-stranded DNA, the ATP-dependent uptake of single-stranded DNA by duplex DNA, and the ATP-dependent hybridization of homologous single-stranded DNAs. It interacts with LexA causing its activation and leading to its autocatalytic cleavage. This Chelativorans sp. (strain BNC1) protein is Protein RecA.